A 356-amino-acid chain; its full sequence is Vesicular integral-membrane protein VIP36 (356 aa).

The signal sequence occupies residues 1–44 (MAAEGWIWRWGWGRRCLGRPGLLGPGPGPTTPLFLLLLLGSVTA). Residues 45–322 (DITDGNSEHL…FRSGPLTGWR (278 aa)) lie on the Lumenal side of the membrane. The 225-residue stretch at 52–276 (EHLKREHSLI…DIISMKLFQL (225 aa)) folds into the L-type lectin-like domain. The a carbohydrate site is built by serine 96 and aspartate 131. Positions 162, 164, and 166 each coordinate Ca(2+). An a carbohydrate-binding site is contributed by 164-166 (YPN). Asparagine 183 carries N-linked (GlcNAc...) asparagine glycosylation. Histidine 190 serves as a coordination point for a carbohydrate. A Ca(2+)-binding site is contributed by aspartate 193. A disulfide bridge connects residues cysteine 202 and cysteine 239. 260–262 (GDL) provides a ligand contact to a carbohydrate. A helical transmembrane segment spans residues 323–345 (VFLLLLCALLGIVVCAVVGAVVF). Residues 346–356 (QKRQERNKRFY) lie on the Cytoplasmic side of the membrane.

It depends on Ca(2+) as a cofactor. In terms of tissue distribution, ubiquitous.

The protein resides in the endoplasmic reticulum-Golgi intermediate compartment membrane. Its subcellular location is the golgi apparatus membrane. It localises to the endoplasmic reticulum membrane. In terms of biological role, plays a role as an intracellular lectin in the early secretory pathway. Interacts with N-acetyl-D-galactosamine and high-mannose type glycans and may also bind to O-linked glycans. Involved in the transport and sorting of glycoproteins carrying high mannose-type glycans. This is Vesicular integral-membrane protein VIP36 (LMAN2) from Homo sapiens (Human).